Reading from the N-terminus, the 134-residue chain is Arsenate reductase (134 aa).

Active-site nucleophile residues include C11, C83, and C90. Intrachain disulfides connect C11/C83 and C83/C90.

This sequence belongs to the low molecular weight phosphotyrosine protein phosphatase family. Thioredoxin-coupled ArsC subfamily.

Its subcellular location is the cytoplasm. It catalyses the reaction arsenate + [thioredoxin]-dithiol + H(+) = arsenite + [thioredoxin]-disulfide + H2O. In terms of biological role, catalyzes the reduction of arsenate [As(V)] to arsenite [As(III)]. This Bacillus anthracis (strain A0248) protein is Arsenate reductase.